A 62-amino-acid chain; its full sequence is Large ribosomal subunit protein uL29 (62 aa).

It belongs to the universal ribosomal protein uL29 family.

The chain is Large ribosomal subunit protein uL29 from Geobacter metallireducens (strain ATCC 53774 / DSM 7210 / GS-15).